We begin with the raw amino-acid sequence, 251 residues long: Outer membrane protein assembly factor BamD (251 aa).

The N-terminal stretch at 1–19 is a signal peptide; the sequence is MKLTKLLSALLVIGLVLGG. Cys20 carries the N-palmitoyl cysteine lipid modification. Cys20 is lipidated: S-diacylglycerol cysteine. TPR repeat units follow at residues 33–66, 70–103, and 166–199; these read IATL…HPGN, PQAE…HPAN, and AGKE…YQTT.

Belongs to the BamD family. Part of the Bam complex.

The protein localises to the cell outer membrane. Part of the outer membrane protein assembly complex, which is involved in assembly and insertion of beta-barrel proteins into the outer membrane. The sequence is that of Outer membrane protein assembly factor BamD from Rickettsia prowazekii (strain Madrid E).